The following is a 175-amino-acid chain: Catabolic 3-dehydroquinase (175 aa).

Residue Tyr-26 is the Proton acceptor of the active site. Substrate contacts are provided by Asn-104, His-110, and Asp-117. His-130 (proton donor) is an active-site residue. Substrate is bound by residues 131–132 and Arg-141; that span reads VS.

The protein belongs to the type-II 3-dehydroquinase family. As to quaternary structure, homododecamer. Adopts a ring-like structure, composed of an arrangement of two hexameric rings stacked on top of one another.

The catalysed reaction is 3-dehydroquinate = 3-dehydroshikimate + H2O. It participates in aromatic compound metabolism; 3,4-dihydroxybenzoate biosynthesis; 3,4-dihydroxybenzoate from 3-dehydroquinate: step 1/2. In terms of biological role, is involved in the catabolism of quinate. Allows the utilization of quinate as carbon source via the beta-ketoadipate pathway. This chain is Catabolic 3-dehydroquinase, found in Sordaria macrospora (strain ATCC MYA-333 / DSM 997 / K(L3346) / K-hell).